The chain runs to 442 residues: Histidine--tRNA ligase (442 aa).

Belongs to the class-II aminoacyl-tRNA synthetase family. In terms of assembly, homodimer.

It is found in the cytoplasm. The enzyme catalyses tRNA(His) + L-histidine + ATP = L-histidyl-tRNA(His) + AMP + diphosphate + H(+). This is Histidine--tRNA ligase from Helicobacter acinonychis (strain Sheeba).